A 340-amino-acid polypeptide reads, in one-letter code: 4-dimethylallyltryptophan N-methyltransferase ifgB (340 aa).

It belongs to the methyltransferase superfamily. Homodimer.

It catalyses the reaction 4-(3-methylbut-2-enyl)-L-tryptophan + S-adenosyl-L-methionine = 4-(3-methylbut-2-enyl)-L-abrine + S-adenosyl-L-homocysteine + H(+). Its pathway is alkaloid biosynthesis; ergot alkaloid biosynthesis. 4-dimethylallyltryptophan N-methyltransferase; part of the gene cluster that mediates the biosynthesis of isofumigaclavines, fungal ergot alkaloids. The tryptophan dimethylallyltransferase ifgA catalyzes the first step of ergot alkaloid biosynthesis by condensing dimethylallyl diphosphate (DMAP) and tryptophan to form 4-dimethylallyl-L-tryptophan. The second step is catalyzed by the methyltransferase ifgB that methylates 4-dimethylallyl-L-tryptophan in the presence of S-adenosyl-L-methionine, resulting in the formation of N-methyl-dimethylallyl-L-tryptophan. The catalase ifgD and the FAD-dependent oxidoreductase ifgC then transform N-methyl-dimethylallyl-L-tryptophan to chanoclavine-I which is further oxidized by ifgE in the presence of NAD(+), resulting in the formation of chanoclavine-I aldehyde. The chanoclavine-I aldehyde reductases ifgG and/or fgaOx3 reduce chanoclavine-I aldehyde to dihydrochanoclavine-I aldehyde that spontaneously dehydrates to form 6,8-dimethyl-6,7-didehydroergoline. The festuclavine dehydrogenases ifgF1 and/or ifgF2 then catalyze the reduction of 6,8-dimethyl-6,7-didehydroergoline to form festuclavine. Hydrolysis of festuclavine by a yet undetermined cytochrome P450 monooxygenase (called ifgH) then leads to the formation of isofumigaclavine B which is in turn acetylated by ifgI to isofumigaclavine A. Penicillium roqueforti has interestingly at least two sets of genes for the consumption of chanoclavine-I aldehyde on three different loci, the OYEs ifgG/fgaOx3 and the festuclavine synthase homologs ifgF1/ifgF2. The reason for the duplication of these genes is unclear, probably to ensure the conversion of chanoclavine-I aldehyde by differential gene expression under various environmental conditions. This is 4-dimethylallyltryptophan N-methyltransferase ifgB from Penicillium roqueforti (strain FM164).